Here is a 685-residue protein sequence, read N- to C-terminus: DNA ligase (685 aa).

Residues 48–52 (DAEYD), 97–98 (SL), and glutamate 131 each bind NAD(+). Lysine 133 serves as the catalytic N6-AMP-lysine intermediate. Residues arginine 154, glutamate 190, lysine 304, and lysine 328 each coordinate NAD(+). Zn(2+)-binding residues include cysteine 422, cysteine 425, cysteine 440, and cysteine 445. The BRCT domain occupies 603–685 (PEEGPLSGRR…RLLSGEERPG (83 aa)).

Belongs to the NAD-dependent DNA ligase family. LigA subfamily. Mg(2+) is required as a cofactor. The cofactor is Mn(2+).

The catalysed reaction is NAD(+) + (deoxyribonucleotide)n-3'-hydroxyl + 5'-phospho-(deoxyribonucleotide)m = (deoxyribonucleotide)n+m + AMP + beta-nicotinamide D-nucleotide.. In terms of biological role, DNA ligase that catalyzes the formation of phosphodiester linkages between 5'-phosphoryl and 3'-hydroxyl groups in double-stranded DNA using NAD as a coenzyme and as the energy source for the reaction. It is essential for DNA replication and repair of damaged DNA. This chain is DNA ligase, found in Rubrobacter xylanophilus (strain DSM 9941 / JCM 11954 / NBRC 16129 / PRD-1).